Reading from the N-terminus, the 194-residue chain is UPF0232 protein in recF-gyrB intergenic region (194 aa).

Residues 1-14 are compositionally biased toward acidic residues; sequence MTGPFDDDGPEEDA. The segment at 1 to 81 is disordered; it reads MTGPFDDDGP…GPGPDARDPQ (81 aa). Over residues 30 to 52 the composition is skewed to basic and acidic residues; the sequence is DLVRRTLEEARGAARSQGKDVGR.

It belongs to the UPF0232 family.

This is UPF0232 protein in recF-gyrB intergenic region from Mycolicibacterium smegmatis (Mycobacterium smegmatis).